The sequence spans 430 residues: 3-phosphoshikimate 1-carboxyvinyltransferase (430 aa).

3 residues coordinate 3-phosphoshikimate: K20, S21, and R25. Position 20 (K20) interacts with phosphoenolpyruvate. Phosphoenolpyruvate contacts are provided by G90 and R118. 6 residues coordinate 3-phosphoshikimate: S163, S164, Q165, S191, D311, and K338. Q165 is a phosphoenolpyruvate binding site. The Proton acceptor role is filled by D311. Residues R342 and R383 each coordinate phosphoenolpyruvate.

Belongs to the EPSP synthase family. Monomer.

The protein localises to the cytoplasm. The catalysed reaction is 3-phosphoshikimate + phosphoenolpyruvate = 5-O-(1-carboxyvinyl)-3-phosphoshikimate + phosphate. It participates in metabolic intermediate biosynthesis; chorismate biosynthesis. Catalyzes the transfer of the enolpyruvyl moiety of phosphoenolpyruvate (PEP) to the 5-hydroxyl of shikimate-3-phosphate (S3P) to produce enolpyruvyl shikimate-3-phosphate and inorganic phosphate. The sequence is that of 3-phosphoshikimate 1-carboxyvinyltransferase from Methanosarcina mazei (strain ATCC BAA-159 / DSM 3647 / Goe1 / Go1 / JCM 11833 / OCM 88) (Methanosarcina frisia).